The following is a 262-amino-acid chain: MKRIGIDAGGSLVKVAYEEHGKMHLKTYSSHKMEEVIQWLKTLSPYASFHITGGRSRELNLEGYRVYTIPEFKAIMEGTSYLLHQERKLPKSDYLLVNIGTGTSIFYNENRIAGTGIGGGLLTGLGELLTKESSYTQLIQMAKQGDRTKSDLMVRDIYKDSTSPIDETLTAANFGKVGLDPSNSKEDQMAALIQLIGETILLISHGAAQSVKTSQIVFIGGTLTNNQPLQRVFLHFQEQMNYTATFLNNGGHAGAIGAMLSS.

7 to 14 (DAGGSLVK) is an ATP binding site. Glutamate 71 functions as the Proton acceptor in the catalytic mechanism. Residues threonine 101, 119–123 (GGLLT), and tyrosine 135 contribute to the ATP site.

It belongs to the type II pantothenate kinase family. Homodimer.

The protein resides in the cytoplasm. It carries out the reaction (R)-pantothenate + ATP = (R)-4'-phosphopantothenate + ADP + H(+). It functions in the pathway cofactor biosynthesis; coenzyme A biosynthesis; CoA from (R)-pantothenate: step 1/5. In terms of biological role, catalyzes the phosphorylation of pantothenate (Pan), the first step in CoA biosynthesis. In Oceanobacillus iheyensis (strain DSM 14371 / CIP 107618 / JCM 11309 / KCTC 3954 / HTE831), this protein is Type II pantothenate kinase.